The following is a 214-amino-acid chain: Killer cell lectin-like receptor subfamily B member 1 (214 aa).

Topologically, residues 1–42 (MDAPVLYAELNLAETRGLRCTSAPSLPQDACQGPGWHRVALK) are cytoplasmic. A helical; Signal-anchor for type II membrane protein membrane pass occupies residues 43–63 (LGCAGLIFLLMVLSVLVGFLV). At 64-214 (QKPLIEKCSV…WICQKTLKHV (151 aa)) the chain is on the extracellular side. In terms of domain architecture, C-type lectin spans 98–208 (HCDKCLFTSQ…CSSDNHWICQ (111 aa)). 2 disulfides stabilise this stretch: C119–C207 and C186–C199.

The protein localises to the membrane. In Mus musculus (Mouse), this protein is Killer cell lectin-like receptor subfamily B member 1 (Klrb1).